A 533-amino-acid polypeptide reads, in one-letter code: Adenine deaminase (533 aa).

The protein belongs to the metallo-dependent hydrolases superfamily. Adenine deaminase family. Mn(2+) serves as cofactor.

It carries out the reaction adenine + H2O + H(+) = hypoxanthine + NH4(+). The protein is Adenine deaminase of Sulfurovum sp. (strain NBC37-1).